We begin with the raw amino-acid sequence, 890 residues long: Translation initiation factor IF-2 (890 aa).

The tract at residues 45 to 302 (LIDHLNQKNS…SSLQQGFQKP (258 aa)) is disordered. Polar residues predominate over residues 67–81 (STLNIPSTGGKSKSV). A compositionally biased stretch (basic and acidic residues) spans 92-217 (VKRDPQEAER…RMAEENKWTD (126 aa)). Residues 252–266 (GRGRNAKAARPKKGN) show a composition bias toward basic residues. The span at 267 to 280 (KHAESKADREEARA) shows a compositional bias: basic and acidic residues. In terms of domain architecture, tr-type G spans 389–558 (PRAPVVTIMG…LLQAEVLELK (170 aa)). The interval 398 to 405 (GHVDHGKT) is G1. 398–405 (GHVDHGKT) is a binding site for GTP. The interval 423-427 (GITQH) is G2. Residues 444–447 (DTPG) are G3. Residues 444–448 (DTPGH) and 498–501 (NKID) contribute to the GTP site. A G4 region spans residues 498–501 (NKID). Residues 534–536 (SAK) form a G5 region. An N6-acetyllysine modification is found at lysine 808.

This sequence belongs to the TRAFAC class translation factor GTPase superfamily. Classic translation factor GTPase family. IF-2 subfamily.

The protein localises to the cytoplasm. Its function is as follows. One of the essential components for the initiation of protein synthesis. Protects formylmethionyl-tRNA from spontaneous hydrolysis and promotes its binding to the 30S ribosomal subunits. Also involved in the hydrolysis of GTP during the formation of the 70S ribosomal complex. The polypeptide is Translation initiation factor IF-2 (Shigella dysenteriae serotype 1 (strain Sd197)).